The primary structure comprises 180 residues: Large ribosomal subunit protein uL5 (180 aa).

This sequence belongs to the universal ribosomal protein uL5 family. In terms of assembly, part of the 50S ribosomal subunit; part of the 5S rRNA/L5/L18/L25 subcomplex. Contacts the 5S rRNA and the P site tRNA. Forms a bridge to the 30S subunit in the 70S ribosome.

Functionally, this is one of the proteins that bind and probably mediate the attachment of the 5S RNA into the large ribosomal subunit, where it forms part of the central protuberance. In the 70S ribosome it contacts protein S13 of the 30S subunit (bridge B1b), connecting the 2 subunits; this bridge is implicated in subunit movement. Contacts the P site tRNA; the 5S rRNA and some of its associated proteins might help stabilize positioning of ribosome-bound tRNAs. The chain is Large ribosomal subunit protein uL5 from Chlamydia abortus (strain DSM 27085 / S26/3) (Chlamydophila abortus).